A 103-amino-acid polypeptide reads, in one-letter code: Large ribosomal subunit protein bL21 (103 aa).

It belongs to the bacterial ribosomal protein bL21 family. Part of the 50S ribosomal subunit. Contacts protein L20.

This protein binds to 23S rRNA in the presence of protein L20. This Ruthia magnifica subsp. Calyptogena magnifica protein is Large ribosomal subunit protein bL21.